A 225-amino-acid chain; its full sequence is Holliday junction branch migration complex subunit RuvA (225 aa).

The interval 1–71 is domain I; that stretch reads MISWISGELV…EDSDLLFGFS (71 aa). Residues 72-150 are domain II; sequence SKDQKNFFIE…NELKIQEEKS (79 aa). A flexible linker region spans residues 151-161; the sequence is KDEFHIKDNKI. The domain III stretch occupies residues 161-225; it reads INKIVSDIEL…LDNDSSNIVR (65 aa).

Belongs to the RuvA family. Homotetramer. Forms an RuvA(8)-RuvB(12)-Holliday junction (HJ) complex. HJ DNA is sandwiched between 2 RuvA tetramers; dsDNA enters through RuvA and exits via RuvB. An RuvB hexamer assembles on each DNA strand where it exits the tetramer. Each RuvB hexamer is contacted by two RuvA subunits (via domain III) on 2 adjacent RuvB subunits; this complex drives branch migration. In the full resolvosome a probable DNA-RuvA(4)-RuvB(12)-RuvC(2) complex forms which resolves the HJ.

It is found in the cytoplasm. In terms of biological role, the RuvA-RuvB-RuvC complex processes Holliday junction (HJ) DNA during genetic recombination and DNA repair, while the RuvA-RuvB complex plays an important role in the rescue of blocked DNA replication forks via replication fork reversal (RFR). RuvA specifically binds to HJ cruciform DNA, conferring on it an open structure. The RuvB hexamer acts as an ATP-dependent pump, pulling dsDNA into and through the RuvAB complex. HJ branch migration allows RuvC to scan DNA until it finds its consensus sequence, where it cleaves and resolves the cruciform DNA. This Prochlorococcus marinus (strain MIT 9312) protein is Holliday junction branch migration complex subunit RuvA.